The sequence spans 461 residues: Elongation factor 1-alpha (461 aa).

In terms of domain architecture, tr-type G spans 5–242; it reads KIHINIVVIG…DAILPPSRPT (238 aa). Positions 14 to 21 are G1; it reads GHVDSGKS. Residue 14–21 participates in GTP binding; it reads GHVDSGKS. Residues 70 to 74 are G2; it reads GITID. The interval 91-94 is G3; sequence DAPG. Residues 91-95 and 153-156 each bind GTP; these read DAPGH and NKMD. Residues 153–156 are G4; the sequence is NKMD. Residues 194 to 196 are G5; the sequence is SGW. Residues Glu301 and Glu374 each carry the 5-glutamyl glycerylphosphorylethanolamine modification.

The protein belongs to the TRAFAC class translation factor GTPase superfamily. Classic translation factor GTPase family. EF-Tu/EF-1A subfamily.

Its subcellular location is the cytoplasm. This protein promotes the GTP-dependent binding of aminoacyl-tRNA to the A-site of ribosomes during protein biosynthesis. This is Elongation factor 1-alpha from Apis mellifera (Honeybee).